We begin with the raw amino-acid sequence, 876 residues long: Alanine--tRNA ligase (876 aa).

Residues H568, H572, C670, and H674 each coordinate Zn(2+).

It belongs to the class-II aminoacyl-tRNA synthetase family. Zn(2+) is required as a cofactor.

It localises to the cytoplasm. It carries out the reaction tRNA(Ala) + L-alanine + ATP = L-alanyl-tRNA(Ala) + AMP + diphosphate. Catalyzes the attachment of alanine to tRNA(Ala) in a two-step reaction: alanine is first activated by ATP to form Ala-AMP and then transferred to the acceptor end of tRNA(Ala). Also edits incorrectly charged Ser-tRNA(Ala) and Gly-tRNA(Ala) via its editing domain. In Geobacter metallireducens (strain ATCC 53774 / DSM 7210 / GS-15), this protein is Alanine--tRNA ligase.